Consider the following 139-residue polypeptide: Lymphocyte antigen 6H (139 aa).

An N-terminal signal peptide occupies residues 1–25 (MLPAAMKSLGLALLALLLCPSPAHG). The region spanning 26–113 (LWCQDCTLAN…CEKDLCNGAS (88 aa)) is the UPAR/Ly6 domain. 5 disulfides stabilise this stretch: cysteine 28–cysteine 51, cysteine 31–cysteine 39, cysteine 44–cysteine 72, cysteine 76–cysteine 103, and cysteine 104–cysteine 109. The N-linked (GlcNAc...) asparagine glycan is linked to asparagine 35. Asparagine 110 carries GPI-anchor amidated asparagine lipidation. A propeptide spans 111–139 (GASVAGRSPWALAGGLLLSLGPALLWAGP) (removed in mature form).

In terms of assembly, interacts with CHRNA4 and CHRNA7. As to expression, strongly expressed in brain, also found in lower levels in eye and reproductive tissues.

It localises to the cell membrane. Functionally, believed to act as modulator of nicotinic acetylcholine receptors (nAChRs) activity. In vitro inhibits alpha-3:beta-4-containing nAChRs maximum response. In vitro inhibits alpha-3:beta-4-containing nAChRs maximum response. May play a role in the intracellular trafficking of alpha-7-containing nAChRs and may inhibit their expression at the cell surface. Seems to inhibit alpha-7/CHRNA7 signaling in hippocampal neurons. The polypeptide is Lymphocyte antigen 6H (Ly6h) (Mus musculus (Mouse)).